A 74-amino-acid chain; its full sequence is Putative defensin-like protein 27 (74 aa).

A signal peptide spans 1–19; the sequence is MVHPRFVFFAFLALSVLLA. Cystine bridges form between Cys-36-Cys-74, Cys-46-Cys-65, Cys-51-Cys-70, and Cys-55-Cys-72.

It belongs to the DEFL family.

The protein localises to the secreted. This Arabidopsis thaliana (Mouse-ear cress) protein is Putative defensin-like protein 27.